The chain runs to 81 residues: Acyl carrier protein (81 aa).

The 76-residue stretch at Q4–V79 folds into the Carrier domain. S39 carries the O-(pantetheine 4'-phosphoryl)serine modification.

This sequence belongs to the acyl carrier protein (ACP) family. 4'-phosphopantetheine is transferred from CoA to a specific serine of apo-ACP by AcpS. This modification is essential for activity because fatty acids are bound in thioester linkage to the sulfhydryl of the prosthetic group.

The protein resides in the plastid. It is found in the chloroplast. It participates in lipid metabolism; fatty acid biosynthesis. Carrier of the growing fatty acid chain in fatty acid biosynthesis. The sequence is that of Acyl carrier protein from Guillardia theta (Cryptophyte).